We begin with the raw amino-acid sequence, 99 residues long: Cytochrome c2 iso-1 (99 aa).

Heme c-binding residues include Cys10, Cys13, His14, and Met75.

This sequence belongs to the cytochrome c family. Post-translationally, binds 1 heme c group covalently per subunit.

Its function is as follows. Cytochrome c2 is found mainly in purple, non-sulfur, photosynthetic bacteria where it functions as the electron donor to the oxidized bacteriochlorophyll in the photophosphorylation pathway. However, it may also have a role in the respiratory chain and is found in some non-photosynthetic bacteria. The sequence is that of Cytochrome c2 iso-1 from Magnetospirillum fulvum (Rhodospirillum fulvum).